Reading from the N-terminus, the 239-residue chain is Sugar fermentation stimulation protein homolog (239 aa).

Belongs to the SfsA family.

This Shewanella woodyi (strain ATCC 51908 / MS32) protein is Sugar fermentation stimulation protein homolog.